The sequence spans 443 residues: UDP-N-acetylmuramate--L-alanine ligase (443 aa).

110-116 (GAHGKTS) contacts ATP.

The protein belongs to the MurCDEF family.

It localises to the cytoplasm. It carries out the reaction UDP-N-acetyl-alpha-D-muramate + L-alanine + ATP = UDP-N-acetyl-alpha-D-muramoyl-L-alanine + ADP + phosphate + H(+). Its pathway is cell wall biogenesis; peptidoglycan biosynthesis. Cell wall formation. The protein is UDP-N-acetylmuramate--L-alanine ligase of Lactococcus lactis subsp. lactis (strain IL1403) (Streptococcus lactis).